A 205-amino-acid polypeptide reads, in one-letter code: Protein N-terminal glutamine amidohydrolase (205 aa).

Active-site residues include Cys-20, His-74, and Asp-90.

The protein belongs to the NTAQ1 family. As to quaternary structure, monomer.

The catalysed reaction is N-terminal L-glutaminyl-[protein] + H2O = N-terminal L-glutamyl-[protein] + NH4(+). In terms of biological role, mediates the side-chain deamidation of N-terminal glutamine residues to glutamate, an important step in N-end rule pathway of protein degradation. Conversion of the resulting N-terminal glutamine to glutamate renders the protein susceptible to arginylation, polyubiquitination and degradation as specified by the N-end rule. Does not act on substrates with internal or C-terminal glutamine and does not act on non-glutamine residues in any position. The sequence is that of Protein N-terminal glutamine amidohydrolase (tun) from Drosophila pseudoobscura pseudoobscura (Fruit fly).